The sequence spans 272 residues: Probable proteasome subunit alpha type-6 (272 aa).

The segment covering 243-261 (AARASRAAAEEPQAPTAEA) has biased composition (low complexity). The disordered stretch occupies residues 243–272 (AARASRAAAEEPQAPTAEAILDSADAMETD).

Belongs to the peptidase T1A family. The 26S proteasome consists of a 20S proteasome core and two 19S regulatory subunits. The 20S proteasome core is composed of 28 subunits that are arranged in four stacked rings, resulting in a barrel-shaped structure. The two end rings are each formed by seven alpha subunits, and the two central rings are each formed by seven beta subunits. The catalytic chamber with the active sites is on the inside of the barrel.

Its subcellular location is the cytoplasm. The protein resides in the nucleus. Functionally, the proteasome is a multicatalytic proteinase complex which is characterized by its ability to cleave peptides with Arg, Phe, Tyr, Leu, and Glu adjacent to the leaving group at neutral or slightly basic pH. The proteasome has an ATP-dependent proteolytic activity. The protein is Probable proteasome subunit alpha type-6 of Schizosaccharomyces pombe (strain 972 / ATCC 24843) (Fission yeast).